A 471-amino-acid chain; its full sequence is Membrane-associated sulfotransferase kil1 (471 aa).

The Cytoplasmic segment spans residues 1–12 (MSTTSMILTKKN). Residues 13–33 (IIILSIIIITIIAYQFYITSP) form a helical; Signal-anchor for type II membrane protein membrane-spanning segment. The Lumenal portion of the chain corresponds to 34–471 (QSFPSSNTIT…LLNRDFKWQN (438 aa)). A glycan (N-linked (GlcNAc...) asparagine) is linked at asparagine 47. Low complexity-rich tracts occupy residues 89 to 105 (NQNE…NNNK) and 112 to 127 (NNNN…NNNN). Residues 89-127 (NQNENQNQINNEYNNNKLNDEQENNNNNNYNNNNNNNNN) are disordered. 3'-phosphoadenylyl sulfate is bound by residues 167 to 172 (KSGTTF), arginine 252, and serine 260. N-linked (GlcNAc...) asparagine glycosylation is found at asparagine 324 and asparagine 344. Residue tyrosine 348 coordinates 3'-phosphoadenylyl sulfate.

Belongs to the sulfotransferase 1 family.

It is found in the membrane. Functionally, sulfotransferase involved in intracellular killing of bacteria. This Dictyostelium discoideum (Social amoeba) protein is Membrane-associated sulfotransferase kil1 (kil1).